The following is a 607-amino-acid chain: MLSYQDKAGAFYKDNARANSTKLSLVTEEHGGRRPPYLLFVLLVLLVGILALLAITGVRFHQVSTSNMEFSRLLKEDMEKSEAVHHQVIDVLTPLFKIIGDEIGSRLPQKLNEIKQFILQKTNFFNPNREFDFRDLHWCINPPSKVKVNFTNYCESIGIRKAIASAANPILLSALPGGRSDIFPPHRCSGATTSVGKVFPLSVSLSMSLISRTSEIINMLTAISDGVYGKTYLLAPDDIEREFDTQEIRVFEIGFIKRWLNDMPSLQTTNYMVLPENSKAKVCTIAVGELTLASLCVEESTVLLYHDSSGSQDGILVVTLGIFGTTPMDHIEEVIPVAHPSMEKIHITNHRGFIKDSIATWMVPALASEKQEEQKGCLESACQRKPYPMCNQTSWEPFGGRQLPSYGRLTLPLDASVDLQLNISFTYGPVILNGDGMDYYESPLLNSGWLTIPPKNGTILGLINKAGRGDQFTVIPHVLTFAPMESSGNCYLPIQTSQIIDRDVLIESNLVVLPTQSFRYVIATYDISRSDHAIVYYVYDPIRTISYTHPFRLTTKGRPDFLRIECFVWDDNLWCHQFYRFEANIANSTTSVENLVRIRFSCNRSNP.

The Intravirion portion of the chain corresponds to 1–37 (MLSYQDKAGAFYKDNARANSTKLSLVTEEHGGRRPPY). A helical membrane pass occupies residues 38-58 (LLFVLLVLLVGILALLAITGV). Over 59–607 (RFHQVSTSNM…IRFSCNRSNP (549 aa)) the chain is Virion surface. Residues asparagine 149, asparagine 391, asparagine 422, asparagine 456, asparagine 587, and asparagine 603 are each glycosylated (N-linked (GlcNAc...) asparagine; by host).

It belongs to the paramyxoviruses hemagglutinin-neuraminidase family. Non-sialidase subfamily. In terms of assembly, binds canine SLAMF1 at the cell surface.

It is found in the virion membrane. Its subcellular location is the host cell membrane. In terms of biological role, attaches the virus to cell receptors and thereby initiating infection. Binding of H protein to the receptor induces a conformational change that allows the F protein to trigger virion/cell membranes fusion. The cellular receptor might be SLAM, and may explain the lymphotropism of the virus. The polypeptide is Hemagglutinin glycoprotein (H) (Ailuropoda melanoleuca (Giant panda)).